A 248-amino-acid polypeptide reads, in one-letter code: MTIKNKVIIITGASSGIGKATALLLAEKGAKLVLAARRVEKLEKIVQTIKANSGEAIFAKTDVTKREDNKKLVELAIERYGKVDAIFLNAGIMPNSPLSALKEDEWEQMIDINIKGVLNGIAAVLPSFIAQKSGHIIATSSVAGLKAYPGGAVYGATKWAVRDLMEVLRMESAQEGTNIRTVTIYPAAINTELLETITDKETEQGMTSLYKQYGITPDRIASIVAYAIDQPEDVNVNEFTVGPTSQPW.

An NADP(+)-binding site is contributed by 9–33 (IITGASSGIGKATALLLAEKGAKLV). Substrate is bound at residue Ser-141. The active-site Proton acceptor is the Tyr-154.

The protein belongs to the short-chain dehydrogenases/reductases (SDR) family.

This is an uncharacterized protein from Listeria monocytogenes serovar 1/2a (strain ATCC BAA-679 / EGD-e).